A 447-amino-acid chain; its full sequence is UDP-glucosyl transferase 79T1 (447 aa).

H18 acts as the Proton acceptor in catalysis. The active-site Charge relay is the D116. Residues S265, W323, V324, H341, T346, and E349 each contribute to the UDP site.

Belongs to the UDP-glycosyltransferase family. As to expression, mainly expressed in flowers, flower buds and young leaves, and, to a lesser extent, in old leaves, stems and roots.

Its pathway is secondary metabolite biosynthesis; terpenoid biosynthesis. Its function is as follows. Component of the oleanane-type triterpene saponins (e.g. saponarioside A and saponarioside B) biosynthetic pathway, leading to the production of natural products with detergent properties used as traditional sources of soap. A glycosyltransferase that mediates the conversion of QA-triF to QA-triFR via the elongation of the C-28 sugar chain with a deoxyhexose on the D-fucose moiety. This is UDP-glucosyl transferase 79T1 from Saponaria officinalis (Common soapwort).